The sequence spans 334 residues: HTH-type transcriptional repressor PurR (334 aa).

Positions 2 to 56 (ATIKDVARLAGVSTTTVSHVINKTRFVAETTQEKVMKAVDELNYAPSAVARSLKC) constitute an HTH lacI-type domain. Residues 4–23 (IKDVARLAGVSTTTVSHVIN) constitute a DNA-binding region (H-T-H motif). Residues 48 to 56 (SAVARSLKC) mediate DNA binding. Residues Phe73, Lys189, Phe220, and Asp274 each contribute to the hypoxanthine site.

In terms of assembly, homodimer.

Its pathway is purine metabolism; purine nucleotide biosynthesis [regulation]. Functionally, is the main repressor of the genes involved in the de novo synthesis of purine nucleotides, regulating purB, purC, purEK, purF, purHD, purL, purMN and guaBA expression. PurR is allosterically activated to bind its cognate DNA by binding the purine corepressors, hypoxanthine or guanine, thereby effecting transcription repression. This is HTH-type transcriptional repressor PurR from Vibrio campbellii (strain ATCC BAA-1116).